We begin with the raw amino-acid sequence, 100 residues long: Urease subunit gamma (100 aa).

The protein belongs to the urease gamma subunit family. In terms of assembly, heterotrimer of UreA (gamma), UreB (beta) and UreC (alpha) subunits. Three heterotrimers associate to form the active enzyme.

It localises to the cytoplasm. It catalyses the reaction urea + 2 H2O + H(+) = hydrogencarbonate + 2 NH4(+). Its pathway is nitrogen metabolism; urea degradation; CO(2) and NH(3) from urea (urease route): step 1/1. The sequence is that of Urease subunit gamma from Burkholderia mallei (strain NCTC 10247).